A 912-amino-acid chain; its full sequence is Lateral signaling target protein 2 homolog (912 aa).

Low complexity predominate over residues 323 to 332 (NVNTSNNSDN). 4 disordered regions span residues 323–360 (NVNT…SSFY), 455–610 (ADSG…ESSQ), 664–745 (NSSP…ASSA), and 769–846 (GGGS…APPR). The segment covering 333–355 (SDSRVDDSPNDELRHESETRDNR) has biased composition (basic and acidic residues). The segment covering 455–468 (ADSGLGTANPSVDN) has biased composition (polar residues). Over residues 486 to 505 (SSEEGEIDEYDNEEDDEDSD) the composition is skewed to acidic residues. Residues 530–544 (YRTHKQQHHHRHRRS) show a composition bias toward basic residues. Composition is skewed to polar residues over residues 545-556 (SGSIMSATSSRK) and 572-590 (VPSN…DTSP). Low complexity predominate over residues 591–610 (SSGNQSECSSTSSTTGESSQ). A compositionally biased stretch (basic and acidic residues) spans 682 to 699 (DKPKEPDPTDLFEFRASE). 4 stretches are compositionally biased toward polar residues: residues 705-717 (PGQN…QSIY), 735-745 (PGTSPIRASSA), 780-801 (ERSV…ATDS), and 822-834 (SRSS…NGTS). An FYVE-type zinc finger spans residues 850-910 (DGDAPRCMAC…VCRDCYVREV (61 aa)). Positions 856, 859, 872, 875, 880, 883, 902, and 905 each coordinate Zn(2+).

This sequence belongs to the lst-2 family.

Functionally, negative regulator of epidermal growth factor receptor (EGFR) signaling. In Aedes aegypti (Yellowfever mosquito), this protein is Lateral signaling target protein 2 homolog.